A 153-amino-acid polypeptide reads, in one-letter code: D-aminoacyl-tRNA deacylase (153 aa).

The short motif at 137-138 (GP) is the Gly-cisPro motif, important for rejection of L-amino acids element.

This sequence belongs to the DTD family. Homodimer.

The protein localises to the cytoplasm. The catalysed reaction is glycyl-tRNA(Ala) + H2O = tRNA(Ala) + glycine + H(+). It catalyses the reaction a D-aminoacyl-tRNA + H2O = a tRNA + a D-alpha-amino acid + H(+). An aminoacyl-tRNA editing enzyme that deacylates mischarged D-aminoacyl-tRNAs. Also deacylates mischarged glycyl-tRNA(Ala), protecting cells against glycine mischarging by AlaRS. Acts via tRNA-based rather than protein-based catalysis; rejects L-amino acids rather than detecting D-amino acids in the active site. By recycling D-aminoacyl-tRNA to D-amino acids and free tRNA molecules, this enzyme counteracts the toxicity associated with the formation of D-aminoacyl-tRNA entities in vivo and helps enforce protein L-homochirality. The chain is D-aminoacyl-tRNA deacylase from Myxococcus xanthus (strain DK1622).